The primary structure comprises 327 residues: Putative HTH-type transcriptional regulatory protein Mevan_1514 (327 aa).

The HTH cro/C1-type domain maps to 128 to 189; it reads LKETREKLNI…IKGINITDYF (62 aa). Positions 139-158 form a DNA-binding region, H-T-H motif; the sequence is VGELAEFSRVSRKTIYKYEQ.

This chain is Putative HTH-type transcriptional regulatory protein Mevan_1514, found in Methanococcus vannielii (strain ATCC 35089 / DSM 1224 / JCM 13029 / OCM 148 / SB).